A 509-amino-acid polypeptide reads, in one-letter code: Maturase K (509 aa).

The protein belongs to the intron maturase 2 family. MatK subfamily.

It is found in the plastid. The protein resides in the chloroplast. Usually encoded in the trnK tRNA gene intron. Probably assists in splicing its own and other chloroplast group II introns. The polypeptide is Maturase K (Avicennia marina (Grey mangrove)).